The following is an 82-amino-acid chain: MTDLFANPDKTLDALGLRCPEPVMMVRKTVRHMVAGETLLIIADDPATTRDIPGFCRFMEHTLLAQEIEQTPYRYLLRKGGA.

Catalysis depends on Cys-19, which acts as the Cysteine persulfide intermediate.

The protein belongs to the sulfur carrier protein TusA family. In terms of assembly, interacts with IscS.

Its subcellular location is the cytoplasm. Its pathway is tRNA modification. Sulfur carrier protein involved in sulfur trafficking in the cell. Part of a sulfur-relay system required for 2-thiolation during synthesis of 2-thiouridine of the modified wobble base 5-methylaminomethyl-2-thiouridine (mnm(5)s(2)U) in tRNA. Interacts with IscS and stimulates its cysteine desulfurase activity. Accepts an activated sulfur from IscS, which is then transferred to TusD, and thus determines the direction of sulfur flow from IscS to 2-thiouridine formation. Also appears to be involved in sulfur transfer for the biosynthesis of molybdopterin. This is Sulfur carrier protein TusA from Edwardsiella ictaluri (strain 93-146).